The chain runs to 87 residues: Acyl carrier protein 3 (87 aa).

The Carrier domain maps to 1-79 (MSNPTVLDQI…DLVTYIEAAL (79 aa)). Residue Ser39 is modified to O-(pantetheine 4'-phosphoryl)serine.

It belongs to the acyl carrier protein (ACP) family. In terms of processing, 4'-phosphopantetheine is transferred from CoA to a specific serine of apo-ACP by AcpS. This modification is essential for activity because fatty acids are bound in thioester linkage to the sulfhydryl of the prosthetic group.

The protein resides in the cytoplasm. Its pathway is lipid metabolism; fatty acid biosynthesis. Functionally, carrier of the growing fatty acid chain in fatty acid biosynthesis. This Ralstonia nicotianae (strain ATCC BAA-1114 / GMI1000) (Ralstonia solanacearum) protein is Acyl carrier protein 3.